The following is a 1066-amino-acid chain: Isoleucine--tRNA ligase (1066 aa).

The short motif at 49–59 (PYVSGAIHLGT) is the 'HIGH' region element. A 'KMSKS' region motif is present at residues 625 to 629 (KMSKS). Lysine 628 lines the ATP pocket.

It belongs to the class-I aminoacyl-tRNA synthetase family. IleS type 2 subfamily. As to quaternary structure, monomer. It depends on Zn(2+) as a cofactor.

The protein localises to the cytoplasm. The catalysed reaction is tRNA(Ile) + L-isoleucine + ATP = L-isoleucyl-tRNA(Ile) + AMP + diphosphate. Catalyzes the attachment of isoleucine to tRNA(Ile). As IleRS can inadvertently accommodate and process structurally similar amino acids such as valine, to avoid such errors it has two additional distinct tRNA(Ile)-dependent editing activities. One activity is designated as 'pretransfer' editing and involves the hydrolysis of activated Val-AMP. The other activity is designated 'posttransfer' editing and involves deacylation of mischarged Val-tRNA(Ile). The protein is Isoleucine--tRNA ligase of Pyrococcus furiosus (strain ATCC 43587 / DSM 3638 / JCM 8422 / Vc1).